We begin with the raw amino-acid sequence, 298 residues long: CCR4-NOT transcription complex subunit 9 (298 aa).

This sequence belongs to the CNOT9 family. In terms of assembly, homodimer. Component of the CCR4-NOT complex.

Its subcellular location is the nucleus. The protein localises to the cytoplasm. The protein resides in the P-body. In terms of biological role, component of the CCR4-NOT complex which is one of the major cellular mRNA deadenylases and is linked to various cellular processes including bulk mRNA degradation, miRNA-mediated repression, translational repression during translational initiation and general transcription regulation. Additional complex functions may be a consequence of its influence on mRNA expression. Involved in down-regulation of MYB- and JUN-dependent transcription. Enhances ligand-dependent transcriptional activity of nuclear hormone receptors. May play a role in cell differentiation. This Danio rerio (Zebrafish) protein is CCR4-NOT transcription complex subunit 9.